The primary structure comprises 182 residues: UPF0200 protein Mthe_1012 (182 aa).

Residue 8–15 (GMPGSGKS) coordinates ATP.

Belongs to the UPF0200 family.

The chain is UPF0200 protein Mthe_1012 from Methanothrix thermoacetophila (strain DSM 6194 / JCM 14653 / NBRC 101360 / PT) (Methanosaeta thermophila).